Consider the following 648-residue polypeptide: Threonine--tRNA ligase (648 aa).

Positions M1–T63 constitute a TGS domain. The segment at D243–P541 is catalytic. 3 residues coordinate Zn(2+): C337, H388, and H518.

Belongs to the class-II aminoacyl-tRNA synthetase family. As to quaternary structure, homodimer. The cofactor is Zn(2+).

It is found in the cytoplasm. It carries out the reaction tRNA(Thr) + L-threonine + ATP = L-threonyl-tRNA(Thr) + AMP + diphosphate + H(+). Catalyzes the attachment of threonine to tRNA(Thr) in a two-step reaction: L-threonine is first activated by ATP to form Thr-AMP and then transferred to the acceptor end of tRNA(Thr). Also edits incorrectly charged L-seryl-tRNA(Thr). This chain is Threonine--tRNA ligase, found in Pediococcus pentosaceus (strain ATCC 25745 / CCUG 21536 / LMG 10740 / 183-1w).